We begin with the raw amino-acid sequence, 230 residues long: RING finger protein 141 (230 aa).

Gly2 carries N-myristoyl glycine lipidation. The segment at 155 to 192 (CCICMDGRADLILPCAHSFCQKCIDKWSDRHRNCPICR) adopts an RING-type zinc-finger fold.

The protein resides in the membrane. Functionally, may be involved in spermatogenesis. The protein is RING finger protein 141 (RNF141) of Bos taurus (Bovine).